Reading from the N-terminus, the 232-residue chain is Large ribosomal subunit protein uL1 (232 aa).

It belongs to the universal ribosomal protein uL1 family. As to quaternary structure, part of the 50S ribosomal subunit.

Functionally, binds directly to 23S rRNA. The L1 stalk is quite mobile in the ribosome, and is involved in E site tRNA release. Protein L1 is also a translational repressor protein, it controls the translation of the L11 operon by binding to its mRNA. In Chlamydia abortus (strain DSM 27085 / S26/3) (Chlamydophila abortus), this protein is Large ribosomal subunit protein uL1.